The following is a 389-amino-acid chain: Gastricsin (389 aa).

The N-terminal stretch at 1–16 is a signal peptide; the sequence is MKWMVVALVCLQLLEA. Positions 17-59 are cleaved as a propeptide — activation peptide; the sequence is KVTKVTLKKFKSIRENLREQGLLEDFLKTNHYDPAQKYHFGDF. Residues 73–386 form the Peptidase A1 domain; it reads YFGEISIGTP…DMGNNRVGFA (314 aa). Residue aspartate 91 is part of the active site. Disulfide bonds link cysteine 104–cysteine 109 and cysteine 268–cysteine 272. Aspartate 277 is a catalytic residue. An intrachain disulfide couples cysteine 311 to cysteine 344.

The protein belongs to the peptidase A1 family.

It is found in the secreted. It catalyses the reaction More restricted specificity than pepsin A, but shows preferential cleavage at Tyr-|-Xaa bonds. High activity on hemoglobin.. Hydrolyzes a variety of proteins. This is Gastricsin (PGC) from Suncus murinus (Asian house shrew).